The sequence spans 208 residues: Uracil phosphoribosyltransferase (208 aa).

5-phospho-alpha-D-ribose 1-diphosphate contacts are provided by residues Arg-78, Arg-103, and 130–138 (DPMLATGGS). Residues Ile-193 and 198–200 (GDA) contribute to the uracil site. Position 199 (Asp-199) interacts with 5-phospho-alpha-D-ribose 1-diphosphate.

The protein belongs to the UPRTase family. Requires Mg(2+) as cofactor.

The catalysed reaction is UMP + diphosphate = 5-phospho-alpha-D-ribose 1-diphosphate + uracil. It functions in the pathway pyrimidine metabolism; UMP biosynthesis via salvage pathway; UMP from uracil: step 1/1. With respect to regulation, allosterically activated by GTP. In terms of biological role, catalyzes the conversion of uracil and 5-phospho-alpha-D-ribose 1-diphosphate (PRPP) to UMP and diphosphate. This chain is Uracil phosphoribosyltransferase, found in Haemophilus influenzae (strain 86-028NP).